A 366-amino-acid polypeptide reads, in one-letter code: tRNA/tmRNA (uracil-C(5))-methyltransferase (366 aa).

Residues glutamine 190, tyrosine 218, asparagine 223, glutamate 239, and aspartate 299 each coordinate S-adenosyl-L-methionine. Catalysis depends on cysteine 324, which acts as the Nucleophile. The Proton acceptor role is filled by glutamate 358.

Belongs to the class I-like SAM-binding methyltransferase superfamily. RNA M5U methyltransferase family. TrmA subfamily.

The catalysed reaction is uridine(54) in tRNA + S-adenosyl-L-methionine = 5-methyluridine(54) in tRNA + S-adenosyl-L-homocysteine + H(+). It catalyses the reaction uridine(341) in tmRNA + S-adenosyl-L-methionine = 5-methyluridine(341) in tmRNA + S-adenosyl-L-homocysteine + H(+). Dual-specificity methyltransferase that catalyzes the formation of 5-methyluridine at position 54 (m5U54) in all tRNAs, and that of position 341 (m5U341) in tmRNA (transfer-mRNA). This Klebsiella pneumoniae (strain 342) protein is tRNA/tmRNA (uracil-C(5))-methyltransferase.